A 105-amino-acid polypeptide reads, in one-letter code: Phosphoribosyl-ATP pyrophosphatase (105 aa).

It belongs to the PRA-PH family.

The protein resides in the cytoplasm. The catalysed reaction is 1-(5-phospho-beta-D-ribosyl)-ATP + H2O = 1-(5-phospho-beta-D-ribosyl)-5'-AMP + diphosphate + H(+). The protein operates within amino-acid biosynthesis; L-histidine biosynthesis; L-histidine from 5-phospho-alpha-D-ribose 1-diphosphate: step 2/9. The sequence is that of Phosphoribosyl-ATP pyrophosphatase from Roseobacter denitrificans (strain ATCC 33942 / OCh 114) (Erythrobacter sp. (strain OCh 114)).